A 411-amino-acid chain; its full sequence is Citrate synthase (411 aa).

Active-site residues include histidine 304 and aspartate 363.

This sequence belongs to the citrate synthase family.

The enzyme catalyses oxaloacetate + acetyl-CoA + H2O = citrate + CoA + H(+). Its pathway is carbohydrate metabolism; tricarboxylic acid cycle; isocitrate from oxaloacetate: step 1/2. The chain is Citrate synthase (gltA) from Rickettsia helvetica.